The following is a 199-amino-acid chain: Recombination protein RecR (199 aa).

Residues 57-72 form a C4-type zinc finger; that stretch reads CPICGNITEKEICDIC. The region spanning 80-176 is the Toprim domain; the sequence is TTIMVVEQPK…KVTRLAAGLS (97 aa).

The protein belongs to the RecR family.

May play a role in DNA repair. It seems to be involved in an RecBC-independent recombinational process of DNA repair. It may act with RecF and RecO. This Lactobacillus acidophilus (strain ATCC 700396 / NCK56 / N2 / NCFM) protein is Recombination protein RecR.